We begin with the raw amino-acid sequence, 138 residues long: Putative pre-16S rRNA nuclease (138 aa).

This sequence belongs to the YqgF nuclease family.

The protein localises to the cytoplasm. Functionally, could be a nuclease involved in processing of the 5'-end of pre-16S rRNA. The sequence is that of Putative pre-16S rRNA nuclease from Klebsiella pneumoniae subsp. pneumoniae (strain ATCC 700721 / MGH 78578).